The chain runs to 494 residues: GlcNAc-binding protein A (494 aa).

Positions 1–21 (MKLNKIMLAMVVMSISGTAMA) are cleaved as a signal peptide. The region spanning 22-192 (HGYIENPPSR…TFYNMIDAEF (171 aa)) is the Chitin-binding type-4 domain. Positions 435–484 (APAWSNKSSYQAKDTVTHNGRIYMSKWWADKASVPGDAAVTDTTGNGSGW) constitute a Chitin-binding type-3 domain. A disordered region spans residues 474 to 494 (VTDTTGNGSGWGKVWEDKGAC).

Belongs to the GbpA family.

The protein localises to the secreted. Probably interacts with GlcNAc residues. May promote attachment to both epithelial cell surfaces and chitin. This chain is GlcNAc-binding protein A, found in Yersinia enterocolitica serotype O:8 / biotype 1B (strain NCTC 13174 / 8081).